A 243-amino-acid polypeptide reads, in one-letter code: Pyridoxine 5'-phosphate synthase (243 aa).

Asparagine 7 serves as a coordination point for 3-amino-2-oxopropyl phosphate. 9-10 (DH) is a binding site for 1-deoxy-D-xylulose 5-phosphate. Arginine 18 is a binding site for 3-amino-2-oxopropyl phosphate. Histidine 43 serves as the catalytic Proton acceptor. The 1-deoxy-D-xylulose 5-phosphate site is built by arginine 45 and histidine 50. Glutamate 70 acts as the Proton acceptor in catalysis. Threonine 100 lines the 1-deoxy-D-xylulose 5-phosphate pocket. The active-site Proton donor is histidine 192. 3-amino-2-oxopropyl phosphate-binding positions include glycine 193 and 215-216 (GF).

The protein belongs to the PNP synthase family. Homooctamer; tetramer of dimers.

It is found in the cytoplasm. The catalysed reaction is 3-amino-2-oxopropyl phosphate + 1-deoxy-D-xylulose 5-phosphate = pyridoxine 5'-phosphate + phosphate + 2 H2O + H(+). Its pathway is cofactor biosynthesis; pyridoxine 5'-phosphate biosynthesis; pyridoxine 5'-phosphate from D-erythrose 4-phosphate: step 5/5. In terms of biological role, catalyzes the complicated ring closure reaction between the two acyclic compounds 1-deoxy-D-xylulose-5-phosphate (DXP) and 3-amino-2-oxopropyl phosphate (1-amino-acetone-3-phosphate or AAP) to form pyridoxine 5'-phosphate (PNP) and inorganic phosphate. This Salinibacter ruber (strain DSM 13855 / M31) protein is Pyridoxine 5'-phosphate synthase.